The chain runs to 128 residues: Holo-[acyl-carrier-protein] synthase (128 aa).

Residues Asp-8 and Glu-58 each coordinate Mg(2+).

It belongs to the P-Pant transferase superfamily. AcpS family. Mg(2+) serves as cofactor.

It is found in the cytoplasm. The enzyme catalyses apo-[ACP] + CoA = holo-[ACP] + adenosine 3',5'-bisphosphate + H(+). Its function is as follows. Transfers the 4'-phosphopantetheine moiety from coenzyme A to a Ser of acyl-carrier-protein. In Alkalilimnicola ehrlichii (strain ATCC BAA-1101 / DSM 17681 / MLHE-1), this protein is Holo-[acyl-carrier-protein] synthase.